The sequence spans 259 residues: MFFVLSPAKNLNEKDPAPVSEFTQPDLLAESDILMQQLRELAPQQIAELMHVSDKIALLNAQRNAEWNTPFTPENAKQAVFMFNGDVYEGMDANTLNTDQIQYLQGRVRLLSGLYGLLRPLDLIQPYRLEMGTAFANLRGKNLYEFWGDIITNLLNDTLAQAGSNTLVNLASQEYFKSVNTKKLRARLITPIFKDEKNGKYKIISFYAKRARGLMVRYAAEHNITDPEMLKNFNYEGYAFNDAASNESEWVFMRSEQIK.

This sequence belongs to the UPF0246 family.

The sequence is that of UPF0246 protein NMA1114 from Neisseria meningitidis serogroup A / serotype 4A (strain DSM 15465 / Z2491).